A 566-amino-acid polypeptide reads, in one-letter code: Arginine--tRNA ligase (566 aa).

Positions 123 to 133 (PNVAKPFHVGH) match the 'HIGH' region motif.

The protein belongs to the class-I aminoacyl-tRNA synthetase family. As to quaternary structure, monomer.

The protein resides in the cytoplasm. The catalysed reaction is tRNA(Arg) + L-arginine + ATP = L-arginyl-tRNA(Arg) + AMP + diphosphate. The chain is Arginine--tRNA ligase from Alkaliphilus metalliredigens (strain QYMF).